Here is a 174-residue protein sequence, read N- to C-terminus: Calcium-binding protein F (174 aa).

4 EF-hand domains span residues 9-44, 60-83, 92-127, and 133-162; these read KIFQ…KMDG, VDMD…EAKK, AALA…NGHT, and DQVL…RRID. 5 residues coordinate Ca(2+): D22, N24, D26, S28, and D33. Residues D105, D107, D109, K111, E116, D140, D142, D144, C146, and E151 each coordinate Ca(2+).

In Dictyostelium discoideum (Social amoeba), this protein is Calcium-binding protein F (cbpF).